Reading from the N-terminus, the 352-residue chain is GTPase Obg (352 aa).

An Obg domain is found at 1-159 (MHFLDQAKIF…MYVWLRLKLL (159 aa)). The interval 122-142 (DGGRGNASYKTSTNRAPRQHG) is disordered. Positions 160 to 328 (ADAGLVGLPN…LLDAVLEYLP (169 aa)) constitute an OBG-type G domain. GTP is bound by residues 166–173 (GLPNAGKS), 191–195 (FTTLR), 212–215 (DIPG), 280–283 (NKID), and 309–311 (SGA). 2 residues coordinate Mg(2+): Ser173 and Thr193.

The protein belongs to the TRAFAC class OBG-HflX-like GTPase superfamily. OBG GTPase family. Monomer. Mg(2+) is required as a cofactor.

It localises to the cytoplasm. Functionally, an essential GTPase which binds GTP, GDP and possibly (p)ppGpp with moderate affinity, with high nucleotide exchange rates and a fairly low GTP hydrolysis rate. Plays a role in control of the cell cycle, stress response, ribosome biogenesis and in those bacteria that undergo differentiation, in morphogenesis control. In Novosphingobium aromaticivorans (strain ATCC 700278 / DSM 12444 / CCUG 56034 / CIP 105152 / NBRC 16084 / F199), this protein is GTPase Obg.